A 332-amino-acid polypeptide reads, in one-letter code: Holliday junction branch migration complex subunit RuvB (332 aa).

The segment at 1–182 (MKLNKNSELK…FGLILKLNYY (182 aa)) is large ATPase domain (RuvB-L). ATP-binding positions include leucine 21, arginine 22, glycine 63, lysine 66, threonine 67, threonine 68, 129 to 131 (EDY), arginine 172, tyrosine 182, and arginine 219. Threonine 67 contributes to the Mg(2+) binding site. A small ATPAse domain (RuvB-S) region spans residues 183-253 (SEDELELIIK…ISEIALEKLT (71 aa)). Residues 256–332 (KNGLDDADYT…FKLFKNDKIK (77 aa)) are head domain (RuvB-H). DNA is bound by residues arginine 311 and arginine 316.

Belongs to the RuvB family. Homohexamer. Forms an RuvA(8)-RuvB(12)-Holliday junction (HJ) complex. HJ DNA is sandwiched between 2 RuvA tetramers; dsDNA enters through RuvA and exits via RuvB. An RuvB hexamer assembles on each DNA strand where it exits the tetramer. Each RuvB hexamer is contacted by two RuvA subunits (via domain III) on 2 adjacent RuvB subunits; this complex drives branch migration. In the full resolvosome a probable DNA-RuvA(4)-RuvB(12)-RuvC(2) complex forms which resolves the HJ.

It is found in the cytoplasm. The enzyme catalyses ATP + H2O = ADP + phosphate + H(+). Its function is as follows. The RuvA-RuvB-RuvC complex processes Holliday junction (HJ) DNA during genetic recombination and DNA repair, while the RuvA-RuvB complex plays an important role in the rescue of blocked DNA replication forks via replication fork reversal (RFR). RuvA specifically binds to HJ cruciform DNA, conferring on it an open structure. The RuvB hexamer acts as an ATP-dependent pump, pulling dsDNA into and through the RuvAB complex. RuvB forms 2 homohexamers on either side of HJ DNA bound by 1 or 2 RuvA tetramers; 4 subunits per hexamer contact DNA at a time. Coordinated motions by a converter formed by DNA-disengaged RuvB subunits stimulates ATP hydrolysis and nucleotide exchange. Immobilization of the converter enables RuvB to convert the ATP-contained energy into a lever motion, pulling 2 nucleotides of DNA out of the RuvA tetramer per ATP hydrolyzed, thus driving DNA branch migration. The RuvB motors rotate together with the DNA substrate, which together with the progressing nucleotide cycle form the mechanistic basis for DNA recombination by continuous HJ branch migration. Branch migration allows RuvC to scan DNA until it finds its consensus sequence, where it cleaves and resolves cruciform DNA. The sequence is that of Holliday junction branch migration complex subunit RuvB from Phytoplasma mali (strain AT).